Reading from the N-terminus, the 262-residue chain is DNA repair protein RecO (262 aa).

Belongs to the RecO family.

Involved in DNA repair and RecF pathway recombination. This chain is DNA repair protein RecO, found in Acidovorax ebreus (strain TPSY) (Diaphorobacter sp. (strain TPSY)).